A 325-amino-acid polypeptide reads, in one-letter code: HTH-type transcriptional regulator BbuR (325 aa).

The HTH lysR-type domain occupies 15 to 72; that stretch reads LDTDLLNVFCWVAKTQSFSRAAAELGTSQPVITRKIGRLEECLGVALFVRSNRGCVLT. Residues 32 to 51 constitute a DNA-binding region (H-T-H motif); the sequence is FSRAAAELGTSQPVITRKIG.

It belongs to the LysR transcriptional regulatory family.

The protein is HTH-type transcriptional regulator BbuR (bbuR) of Bordetella bronchiseptica (strain ATCC BAA-588 / NCTC 13252 / RB50) (Alcaligenes bronchisepticus).